Reading from the N-terminus, the 570-residue chain is Urease subunit alpha (570 aa).

Positions 131–570 constitute a Urease domain; it reads GGFDSHIHFI…LPMAQRYFLF (440 aa). Ni(2+)-binding residues include H136, H138, and K219. K219 carries the N6-carboxylysine modification. Substrate is bound at residue H221. Residues H248 and H274 each contribute to the Ni(2+) site. Residue H322 is the Proton donor of the active site. D362 is a Ni(2+) binding site.

It belongs to the metallo-dependent hydrolases superfamily. Urease alpha subunit family. In terms of assembly, heterotrimer of UreA (gamma), UreB (beta) and UreC (alpha) subunits. Three heterotrimers associate to form the active enzyme. It depends on Ni cation as a cofactor. In terms of processing, carboxylation allows a single lysine to coordinate two nickel ions.

The protein resides in the cytoplasm. The enzyme catalyses urea + 2 H2O + H(+) = hydrogencarbonate + 2 NH4(+). Its pathway is nitrogen metabolism; urea degradation; CO(2) and NH(3) from urea (urease route): step 1/1. The protein is Urease subunit alpha of Beijerinckia indica subsp. indica (strain ATCC 9039 / DSM 1715 / NCIMB 8712).